The chain runs to 144 residues: HISAEIMQLHHSKHHAAYVNNVNVVEEKLAEALGKGDVNTQVSLQPAFRFNGGGHINHSIFWRNLSPSGGGQPCGDLLKAIENDFGSVDKLREKLVAAAVGVQGSGWAWLGFNKESKRLQIATCANQDPLQGTTGLFPLLGIDV.

Histidine 10, histidine 58, and aspartate 143 together coordinate Mn(2+).

This sequence belongs to the iron/manganese superoxide dismutase family. As to quaternary structure, homotetramer. Mn(2+) serves as cofactor.

It localises to the mitochondrion matrix. It carries out the reaction 2 superoxide + 2 H(+) = H2O2 + O2. In terms of biological role, destroys superoxide anion radicals which are normally produced within the cells and which are toxic to biological systems. The polypeptide is Superoxide dismutase [Mn], mitochondrial (Eptatretus stoutii (Pacific hagfish)).